The sequence spans 688 residues: Elongation factor G (688 aa).

One can recognise a tr-type G domain in the interval isoleucine 8–valine 282. GTP contacts are provided by residues alanine 17–threonine 24, aspartate 81–histidine 85, and asparagine 135–aspartate 138.

This sequence belongs to the TRAFAC class translation factor GTPase superfamily. Classic translation factor GTPase family. EF-G/EF-2 subfamily.

Its subcellular location is the cytoplasm. Catalyzes the GTP-dependent ribosomal translocation step during translation elongation. During this step, the ribosome changes from the pre-translocational (PRE) to the post-translocational (POST) state as the newly formed A-site-bound peptidyl-tRNA and P-site-bound deacylated tRNA move to the P and E sites, respectively. Catalyzes the coordinated movement of the two tRNA molecules, the mRNA and conformational changes in the ribosome. This Mycoplasma pneumoniae (strain ATCC 29342 / M129 / Subtype 1) (Mycoplasmoides pneumoniae) protein is Elongation factor G (fusA).